We begin with the raw amino-acid sequence, 417 residues long: Serine hydroxymethyltransferase (417 aa).

(6S)-5,6,7,8-tetrahydrofolate-binding positions include L121 and 125 to 127 (GHL). K229 is subject to N6-(pyridoxal phosphate)lysine. 355–357 (SPF) provides a ligand contact to (6S)-5,6,7,8-tetrahydrofolate.

This sequence belongs to the SHMT family. In terms of assembly, homodimer. Pyridoxal 5'-phosphate serves as cofactor.

The protein localises to the cytoplasm. The catalysed reaction is (6R)-5,10-methylene-5,6,7,8-tetrahydrofolate + glycine + H2O = (6S)-5,6,7,8-tetrahydrofolate + L-serine. It participates in one-carbon metabolism; tetrahydrofolate interconversion. Its pathway is amino-acid biosynthesis; glycine biosynthesis; glycine from L-serine: step 1/1. Functionally, catalyzes the reversible interconversion of serine and glycine with tetrahydrofolate (THF) serving as the one-carbon carrier. This reaction serves as the major source of one-carbon groups required for the biosynthesis of purines, thymidylate, methionine, and other important biomolecules. Also exhibits THF-independent aldolase activity toward beta-hydroxyamino acids, producing glycine and aldehydes, via a retro-aldol mechanism. This is Serine hydroxymethyltransferase from Serratia proteamaculans (strain 568).